The primary structure comprises 79 residues: Dolichyl-diphosphooligosaccharide--protein glycosyltransferase subunit TMEM258 (79 aa).

Helical transmembrane passes span 19 to 39 (PLLT…FTMI) and 55 to 75 (FIAA…LLWV).

Belongs to the OST5 family. In terms of assembly, component of the oligosaccharyltransferase (OST) complex.

The protein localises to the membrane. It participates in protein modification; protein glycosylation. In terms of biological role, subunit of the oligosaccharyl transferase (OST) complex that catalyzes the initial transfer of a defined glycan (Glc(3)Man(9)GlcNAc(2) in eukaryotes) from the lipid carrier dolichol-pyrophosphate to an asparagine residue within an Asn-X-Ser/Thr consensus motif in nascent polypeptide chains, the first step in protein N-glycosylation. N-glycosylation occurs cotranslationally and the complex associates with the Sec61 complex at the channel-forming translocon complex that mediates protein translocation across the endoplasmic reticulum (ER). All subunits are required for a maximal enzyme activity. The chain is Dolichyl-diphosphooligosaccharide--protein glycosyltransferase subunit TMEM258 from Caenorhabditis elegans.